The following is a 69-amino-acid chain: Putative membrane protein insertion efficiency factor (69 aa).

It belongs to the UPF0161 family.

It is found in the cell membrane. Functionally, could be involved in insertion of integral membrane proteins into the membrane. The protein is Putative membrane protein insertion efficiency factor of Thermoanaerobacter pseudethanolicus (strain ATCC 33223 / 39E) (Clostridium thermohydrosulfuricum).